The chain runs to 359 residues: Phospho-N-acetylmuramoyl-pentapeptide-transferase (359 aa).

10 helical membrane passes run Gln-3–Ile-23, Val-55–Phe-75, Val-80–Leu-100, Thr-117–Phe-137, Ile-156–Ala-176, Leu-187–Phe-207, Leu-231–Ala-251, Ile-255–Thr-275, Ile-280–Ile-300, and Phe-334–Leu-354.

The protein belongs to the glycosyltransferase 4 family. MraY subfamily. Requires Mg(2+) as cofactor.

Its subcellular location is the cell membrane. It catalyses the reaction UDP-N-acetyl-alpha-D-muramoyl-L-alanyl-gamma-D-glutamyl-meso-2,6-diaminopimeloyl-D-alanyl-D-alanine + di-trans,octa-cis-undecaprenyl phosphate = di-trans,octa-cis-undecaprenyl diphospho-N-acetyl-alpha-D-muramoyl-L-alanyl-D-glutamyl-meso-2,6-diaminopimeloyl-D-alanyl-D-alanine + UMP. It participates in cell wall biogenesis; peptidoglycan biosynthesis. In terms of biological role, catalyzes the initial step of the lipid cycle reactions in the biosynthesis of the cell wall peptidoglycan: transfers peptidoglycan precursor phospho-MurNAc-pentapeptide from UDP-MurNAc-pentapeptide onto the lipid carrier undecaprenyl phosphate, yielding undecaprenyl-pyrophosphoryl-MurNAc-pentapeptide, known as lipid I. The sequence is that of Phospho-N-acetylmuramoyl-pentapeptide-transferase from Mycobacterium leprae (strain TN).